A 570-amino-acid polypeptide reads, in one-letter code: Cation/calcium exchanger 1 (570 aa).

Transmembrane regions (helical) follow at residues Leu14–Thr34, Ser97–Gly117, Met141–Val161, Ile176–Gly196, Val212–Ile232, Ala235–Phe255, Cys344–Tyr364, Leu371–Thr391, Phe401–Ala421, Leu427–Leu447, Tyr479–Leu499, Ser513–Pro533, and Gly546–Leu566.

Belongs to the Ca(2+):cation antiporter (CaCA) (TC 2.A.19) family. Cation/calcium exchanger (CCX) subfamily. As to expression, expressed in roots, leaves, stems and flowers.

Its subcellular location is the vacuole membrane. In terms of biological role, vacuolar membrane-localized H(+)-dependent K(+) and Na(+) transporter. This is Cation/calcium exchanger 1 (CCX1) from Arabidopsis thaliana (Mouse-ear cress).